Consider the following 182-residue polypeptide: UPF0200 protein Mthe_1012 (182 aa).

Position 8-15 (8-15) interacts with ATP; sequence GMPGSGKS.

The protein belongs to the UPF0200 family.

In Methanothrix thermoacetophila (strain DSM 6194 / JCM 14653 / NBRC 101360 / PT) (Methanosaeta thermophila), this protein is UPF0200 protein Mthe_1012.